The primary structure comprises 257 residues: Flagellar brake protein YcgR 2 (257 aa).

The 114-residue stretch at 131–244 (QRREFFRVQT…AERTLQRVVT (114 aa)) folds into the PilZ domain.

It belongs to the YcgR family. Monomer. Interacts with the flagellar basal bodies.

The protein resides in the bacterial flagellum basal body. Acts as a flagellar brake, regulating swimming and swarming in a bis-(3'-5') cyclic diguanylic acid (c-di-GMP)-dependent manner. Binds 1 c-di-GMP dimer per subunit. Increasing levels of c-di-GMP lead to decreased motility. This is Flagellar brake protein YcgR 2 from Paraburkholderia phytofirmans (strain DSM 17436 / LMG 22146 / PsJN) (Burkholderia phytofirmans).